Reading from the N-terminus, the 123-residue chain is Small ribosomal subunit protein uS12 (123 aa).

At Asp-89 the chain carries 3-methylthioaspartic acid.

The protein belongs to the universal ribosomal protein uS12 family. In terms of assembly, part of the 30S ribosomal subunit. Contacts proteins S8 and S17. May interact with IF1 in the 30S initiation complex.

In terms of biological role, with S4 and S5 plays an important role in translational accuracy. Its function is as follows. Interacts with and stabilizes bases of the 16S rRNA that are involved in tRNA selection in the A site and with the mRNA backbone. Located at the interface of the 30S and 50S subunits, it traverses the body of the 30S subunit contacting proteins on the other side and probably holding the rRNA structure together. The combined cluster of proteins S8, S12 and S17 appears to hold together the shoulder and platform of the 30S subunit. The sequence is that of Small ribosomal subunit protein uS12 from Rhizobium etli (strain ATCC 51251 / DSM 11541 / JCM 21823 / NBRC 15573 / CFN 42).